Reading from the N-terminus, the 541-residue chain is MAKEIKYGIEARKALEEGVNKLANTVRVTIGPKGRNVVLDKSYGAPLITNDGVTIAKDIELEDAFENMGAQLVKEVAAKTNDVAGDGTTTATVLAQAMINEGMKNLAAGANPIVLRKGMKKATDCAVEAIAGMSEKVTGKDQIAKVAAISAGDEEVGQMVADAMEKVSNDGVITIEESKTMKTELDLVEGMQFDRGYISAYMATDMDKMEAVLDNPYILITDKKISNIQEILPVLEQIVQSGAKLLIIAEDVEGEALTTLIVNKLRGTFNVVAVKAPGYGDRRKEMLKDIAILTGGQVISEELGLELKDTTMDMLGRAKSVKVQKENTVIVDGEGAKEDIDARVAQIKAQLEETTSEFDKEKLQERLAKLAGGVAVIRVGAATETEMKEAKLRMEDALNATRAAVEEGVVSGGGSAYIHASKKVAELVKTLSGDEKIGAQIILKALEAPLFHIAYNAGLEGAVIINKVRESEVGTGFDAYKEEYVNMIDAGILDPAKVTRSALQNATSVASTLLTTESVVANIKEDAPAMPAGGAGMGGMM.

ATP is bound by residues 29-32, 86-90, Gly-413, and Asp-494; these read TIGP and DGTTT.

It belongs to the chaperonin (HSP60) family. Forms a cylinder of 14 subunits composed of two heptameric rings stacked back-to-back. Interacts with the co-chaperonin GroES.

It is found in the cytoplasm. It carries out the reaction ATP + H2O + a folded polypeptide = ADP + phosphate + an unfolded polypeptide.. In terms of biological role, together with its co-chaperonin GroES, plays an essential role in assisting protein folding. The GroEL-GroES system forms a nano-cage that allows encapsulation of the non-native substrate proteins and provides a physical environment optimized to promote and accelerate protein folding. This is Chaperonin GroEL from Lachnospira eligens (strain ATCC 27750 / DSM 3376 / VPI C15-48 / C15-B4) (Eubacterium eligens).